The chain runs to 243 residues: MDGFDVSQAPPEYQAIKPLADLFVVGMGVGWIINYIGMVYISFKHETYGMSIMPLCCNIAWELVYCLVFPSKSPVERGVFWMGLLINFGVMYAAITFSSREWGHAPLVERNISLIFFVATMGFLSGHVALALEIGPALAYSWGAVICQLLLSVGGLSQLLCRGSTRGASYTLWASRFLGSTCTVGFAGLRWMYWSEAFGWLNSPLVLWSLVVFLSIDGFYGICFWYVDRNEKSLGISGPKKAN.

Transmembrane regions (helical) follow at residues 23–43 (FVVG…YISF), 49–69 (GMSI…CLVF), 78–98 (GVFW…ITFS), 112–132 (ISLI…ALAL), 134–154 (IGPA…LSVG), 172–194 (LWAS…WMYW), and 205–225 (LVLW…ICFW).

This sequence belongs to the paxB family.

Its subcellular location is the membrane. It participates in secondary metabolite biosynthesis. Terpene cyclase; part of the ATM2 gene cluster that mediates the biosynthesis of paxilline, a mycotoxin that acts as an inhibitor of mammalian maxi-K channels. PaxG, the geranylgeranyl diphosphate (GGPP) synthase is proposed to catalyze the first step in paxilline biosynthesis. Condensation of indole-3-glycerol phosphate with GGPP by paxC then forms 3-geranylgeranylindole (3-GGI), followed by epoxidation and cyclization of this intermediate (by paxM and paxB) to form paspaline. Paspaline is subsequently converted to 13-desoxypaxilline by paxP, the latter being then converted to paxilline by paxQ. Finally paxilline can be mono- and di-prenylated by paxD. This chain is Terpene cyclase paxB, found in Penicillium paxilli.